Here is a 251-residue protein sequence, read N- to C-terminus: MPKRDAPWRLTAGTAKISRTGNNSRALIMGPSTSRASAWVNRPMYRKPRIYRMYRTPDVPKGCEGPCKVQSFEQRHDVSHVGKVICISDVTRGNGITHRVGKRFCVKSVYILGKIWMDENIKLKNHTNSVMFWLVRDRRPYGTPMDFGQVFNMYDNEPSTATVKNDLRDRYQVMHRFYAKVTGGQYASNEQALVRRFWKVNNHVVYNHQEAGKYENHTENALLLYMACTHASNPVYATLKIRVYFYDSIMN.

Positions 3-20 match the Bipartite nuclear localization signal motif; that stretch reads KRDAPWRLTAGTAKISRT. The short motif at 35-49 is the Nuclear localization signal element; sequence RASAWVNRPMYRKPR. The segment at 63–80 is a zinc-finger region; that stretch reads CEGPCKVQSFEQRHDVSH. The Nuclear export signal motif lies at 96 to 117; sequence ITHRVGKRFCVKSVYILGKIWM. The Bipartite nuclear localization signal signature appears at 195 to 242; it reads RRFWKVNNHVVYNHQEAGKYENHTENALLLYMACTHASNPVYATLKIR.

It belongs to the geminiviridae capsid protein family. Homomultimer. Binds to single-stranded and double-stranded viral DNA. Interacts (via nuclear localization signals) with host importin alpha-1a.

It is found in the virion. The protein localises to the host nucleus. Its function is as follows. Encapsidates the viral DNA into characteristic twinned ('geminate') particles. Binds the genomic viral ssDNA and shuttles it into and out of the cell nucleus. The CP of bipartite geminiviruses is not required for cell-to-cell or systemic movement. In Capsicum annuum (Capsicum pepper), this protein is Capsid protein.